We begin with the raw amino-acid sequence, 445 residues long: GTPase Der (445 aa).

EngA-type G domains lie at 3 to 167 (PVIA…YADQ) and 180 to 353 (IKIA…AAAM). GTP contacts are provided by residues 9 to 16 (GRPNVGKS), 56 to 60 (DTGGF), 119 to 122 (NKAE), 186 to 193 (GRPNVGKS), 233 to 237 (DTAGL), and 298 to 301 (NKWD). The region spanning 354–438 (AKLPTPKLTR…PLRIEFRSST (85 aa)) is the KH-like domain.

Belongs to the TRAFAC class TrmE-Era-EngA-EngB-Septin-like GTPase superfamily. EngA (Der) GTPase family. As to quaternary structure, associates with the 50S ribosomal subunit.

Its function is as follows. GTPase that plays an essential role in the late steps of ribosome biogenesis. The polypeptide is GTPase Der (Burkholderia multivorans (strain ATCC 17616 / 249)).